Consider the following 218-residue polypeptide: Probable transaldolase (218 aa).

Lys87 acts as the Schiff-base intermediate with substrate in catalysis.

Belongs to the transaldolase family. Type 3B subfamily.

It is found in the cytoplasm. The catalysed reaction is D-sedoheptulose 7-phosphate + D-glyceraldehyde 3-phosphate = D-erythrose 4-phosphate + beta-D-fructose 6-phosphate. It functions in the pathway carbohydrate degradation; pentose phosphate pathway; D-glyceraldehyde 3-phosphate and beta-D-fructose 6-phosphate from D-ribose 5-phosphate and D-xylulose 5-phosphate (non-oxidative stage): step 2/3. Functionally, transaldolase is important for the balance of metabolites in the pentose-phosphate pathway. The polypeptide is Probable transaldolase (Bacteroides fragilis (strain YCH46)).